Reading from the N-terminus, the 213-residue chain is Adenylate kinase (213 aa).

10 to 15 is an ATP binding site; it reads GSGKGT. The tract at residues 30–59 is NMP; it reads SVGDLLRNIISSESKLGKGIKDTVESGNLI. AMP contacts are provided by residues R36, 57–59, 83–86, and Q90; these read NLI and GFPR. The tract at residues 125-160 is LID; sequence DRLTCLDCKSIYSISSFKNTTCAKCKSTRLEKRIDD. Position 126 (R126) interacts with ATP. Zn(2+)-binding residues include C129 and C132. An ATP-binding site is contributed by 135-136; the sequence is IY. C146 and C149 together coordinate Zn(2+). Residues R157 and R169 each contribute to the AMP site. An ATP-binding site is contributed by L195.

This sequence belongs to the adenylate kinase family. Monomer.

It localises to the cytoplasm. The enzyme catalyses AMP + ATP = 2 ADP. It participates in purine metabolism; AMP biosynthesis via salvage pathway; AMP from ADP: step 1/1. Functionally, catalyzes the reversible transfer of the terminal phosphate group between ATP and AMP. Plays an important role in cellular energy homeostasis and in adenine nucleotide metabolism. In Wolbachia pipientis subsp. Culex pipiens (strain wPip), this protein is Adenylate kinase.